A 254-amino-acid polypeptide reads, in one-letter code: tRNA (guanine-N(1)-)-methyltransferase (254 aa).

S-adenosyl-L-methionine contacts are provided by residues glycine 117 and leucine 136–leucine 141.

This sequence belongs to the RNA methyltransferase TrmD family. Homodimer.

It is found in the cytoplasm. It catalyses the reaction guanosine(37) in tRNA + S-adenosyl-L-methionine = N(1)-methylguanosine(37) in tRNA + S-adenosyl-L-homocysteine + H(+). In terms of biological role, specifically methylates guanosine-37 in various tRNAs. This is tRNA (guanine-N(1)-)-methyltransferase from Levilactobacillus brevis (strain ATCC 367 / BCRC 12310 / CIP 105137 / JCM 1170 / LMG 11437 / NCIMB 947 / NCTC 947) (Lactobacillus brevis).